The chain runs to 823 residues: Leucine--tRNA ligase (823 aa).

Positions 41 to 51 (PYPSGTLHVGH) match the 'HIGH' region motif. A 'KMSKS' region motif is present at residues 580-584 (KMSKS). Position 583 (K583) interacts with ATP.

The protein belongs to the class-I aminoacyl-tRNA synthetase family.

The protein localises to the cytoplasm. It carries out the reaction tRNA(Leu) + L-leucine + ATP = L-leucyl-tRNA(Leu) + AMP + diphosphate. The sequence is that of Leucine--tRNA ligase from Thermosipho melanesiensis (strain DSM 12029 / CIP 104789 / BI429).